A 346-amino-acid polypeptide reads, in one-letter code: Very-long-chain 3-oxoacyl-CoA reductase (346 aa).

The chain crosses the membrane as a helical span at residues 23–43; that stretch reads AAWIVFGLGISKMVFLTLNFS. 7 residues coordinate NADP(+): V69, D123, N150, Y222, K226, V255, and S257. Y222 functions as the Proton donor in the catalytic mechanism. K226 serves as the catalytic Lowers pKa of active site Tyr.

This sequence belongs to the short-chain dehydrogenases/reductases (SDR) family.

The protein resides in the endoplasmic reticulum membrane. It catalyses the reaction a very-long-chain (3R)-3-hydroxyacyl-CoA + NADP(+) = a very-long-chain 3-oxoacyl-CoA + NADPH + H(+). It participates in lipid metabolism; fatty acid biosynthesis. In terms of biological role, component of the microsomal membrane bound fatty acid elongation system, which produces the 26-carbon very long-chain fatty acids (VLCFA) from palmitate. Catalyzes the reduction of the 3-ketoacyl-CoA intermediate that is formed in each cycle of fatty acid elongation. VLCFAs serve as precursors for ceramide and sphingolipids. The sequence is that of Very-long-chain 3-oxoacyl-CoA reductase from Kluyveromyces lactis (strain ATCC 8585 / CBS 2359 / DSM 70799 / NBRC 1267 / NRRL Y-1140 / WM37) (Yeast).